A 349-amino-acid chain; its full sequence is PDZ and LIM domain protein 2 (349 aa).

One can recognise a PDZ domain in the interval 1–84; that stretch reads MALTVNVVGP…PLRLQLDRSQ (84 aa). 2 disordered regions span residues 72 to 95 and 108 to 147; these read SASP…NGEG and LRTH…PIAL. Composition is skewed to polar residues over residues 81–90 and 108–121; these read DRSQTASPGQ and LRTH…QRSA. Serine 124, serine 127, serine 129, serine 134, and serine 137 each carry phosphoserine. A phosphothreonine mark is found at threonine 138 and threonine 142. Phosphoserine occurs at positions 143 and 163. 2 disordered regions span residues 168–212 and 250–272; these read ATHH…SSLD and ERGG…PTSR. Positions 176–192 are enriched in polar residues; it reads GQPTSQQAGHSSPSDST. Residues serine 199, serine 204, serine 205, serine 209, serine 210, and serine 263 each carry the phosphoserine modification. The span at 199-211 shows a compositional bias: low complexity; sequence SPGRPSSPRLSSL. Residues 260 to 270 are compositionally biased toward polar residues; that stretch reads SSLSPKASLPT. Residues 281–341 form the LIM zinc-binding domain; it reads HTCEKCSVNI…EKHARQRYSM (61 aa).

As to quaternary structure, interacts with alpha-actinins ACTN1 and ACTN4, FLNA and MYH9. Interacts (via LIM zinc-binding domain) with MKRN2. As to expression, highly expressed in cornea and lung. Expressed at intermediate level in sclera and combined tissues of the eye irido-corneal angle. Specifically expressed in the corneal epithelial cells but not in other corneal layers.

The protein resides in the cytoplasm. Its subcellular location is the cytoskeleton. Probable adapter protein located at the actin cytoskeleton that promotes cell attachment. Necessary for the migratory capacity of epithelial cells. Overexpression enhances cell adhesion to collagen and fibronectin and suppresses anchorage independent growth. May contribute to tumor cell migratory capacity. The protein is PDZ and LIM domain protein 2 (Pdlim2) of Rattus norvegicus (Rat).